The sequence spans 132 residues: ATP synthase epsilon chain (132 aa).

This sequence belongs to the ATPase epsilon chain family. In terms of assembly, F-type ATPases have 2 components, CF(1) - the catalytic core - and CF(0) - the membrane proton channel. CF(1) has five subunits: alpha(3), beta(3), gamma(1), delta(1), epsilon(1). CF(0) has three main subunits: a, b and c.

The protein resides in the cell membrane. Functionally, produces ATP from ADP in the presence of a proton gradient across the membrane. The chain is ATP synthase epsilon chain from Desulforamulus reducens (strain ATCC BAA-1160 / DSM 100696 / MI-1) (Desulfotomaculum reducens).